Reading from the N-terminus, the 71-residue chain is Small ribosomal subunit protein bS21 (71 aa).

The protein belongs to the bacterial ribosomal protein bS21 family.

The protein is Small ribosomal subunit protein bS21 of Vesicomyosocius okutanii subsp. Calyptogena okutanii (strain HA).